The chain runs to 508 residues: MISTDSLARIALDLQLGISHQDRFHRLIQSVRSLLNSDASALLRYEGGQFIPLAIDGLMQDVLGRRFALKDHPRMEAIARAGDVVRFPADSSLPDPYDGLLPDHDDFKVHACVGLPLFSDQALIGALTIDGMNPTQFDAISDEELRLVGALAAAALNNALLLERLARQSSEPLVPGTRPGPEQPEMIGQSPAMARLRHEIEVVANSELNVLILGETGVGKELIAKAVHRGSQRAKAPLVYLNCAALPESVAESELFGHVKGAFTGAIHNRAGKFELADQGTLFLDEIGELSLPLQAKLLRVLQYGDLQRIGDDTPLKVNVRILAATNRDLKQAVVEGQFRADLYHRLSVFPIHAPALRERPGDIPLLAGYFCERCRLSLGLEQLRIQPQALQLLERHDWPGNVRELEHAIHRAAVLARAEQGSQTPTLASHHFNLAAGPLPPSTSPAMAPMTPLPGGLGLRAATDAFQLALIEQTLAAHNGNWAATARALELDSGNLHRLAKRLGLKA.

Aspartate 56 carries the post-translational modification 4-aspartylphosphate. The 230-residue stretch at 186–415 (MIGQSPAMAR…LEHAIHRAAV (230 aa)) folds into the Sigma-54 factor interaction domain. ATP-binding positions include 214–221 (GETGVGKE) and 277–286 (ADQGTLFLDE). Positions 483 to 502 (WAATARALELDSGNLHRLAK) form a DNA-binding region, H-T-H motif.

Its pathway is nitrogen metabolism; nitric oxide reduction. In terms of biological role, required for the expression of anaerobic nitric oxide (NO) reductase, acts as a transcriptional activator for at least the norVW operon. Activation also requires sigma-54. This Aeromonas hydrophila subsp. hydrophila (strain ATCC 7966 / DSM 30187 / BCRC 13018 / CCUG 14551 / JCM 1027 / KCTC 2358 / NCIMB 9240 / NCTC 8049) protein is Anaerobic nitric oxide reductase transcription regulator NorR.